The primary structure comprises 151 residues: 3-hydroxyacyl-[acyl-carrier-protein] dehydratase FabZ (151 aa).

The active site involves histidine 49.

This sequence belongs to the thioester dehydratase family. FabZ subfamily.

Its subcellular location is the cytoplasm. It carries out the reaction a (3R)-hydroxyacyl-[ACP] = a (2E)-enoyl-[ACP] + H2O. In terms of biological role, involved in unsaturated fatty acids biosynthesis. Catalyzes the dehydration of short chain beta-hydroxyacyl-ACPs and long chain saturated and unsaturated beta-hydroxyacyl-ACPs. The chain is 3-hydroxyacyl-[acyl-carrier-protein] dehydratase FabZ from Wolinella succinogenes (strain ATCC 29543 / DSM 1740 / CCUG 13145 / JCM 31913 / LMG 7466 / NCTC 11488 / FDC 602W) (Vibrio succinogenes).